The following is a 125-amino-acid chain: Phosphoribosyl-AMP cyclohydrolase (125 aa).

Position 80 (Asp80) interacts with Mg(2+). Cys81 serves as a coordination point for Zn(2+). The Mg(2+) site is built by Asp82 and Asp84. Zn(2+) is bound by residues Cys97 and Cys104.

The protein belongs to the PRA-CH family. Homodimer. Requires Mg(2+) as cofactor. Zn(2+) is required as a cofactor.

The protein localises to the cytoplasm. The enzyme catalyses 1-(5-phospho-beta-D-ribosyl)-5'-AMP + H2O = 1-(5-phospho-beta-D-ribosyl)-5-[(5-phospho-beta-D-ribosylamino)methylideneamino]imidazole-4-carboxamide. It participates in amino-acid biosynthesis; L-histidine biosynthesis; L-histidine from 5-phospho-alpha-D-ribose 1-diphosphate: step 3/9. Functionally, catalyzes the hydrolysis of the adenine ring of phosphoribosyl-AMP. In Leifsonia xyli subsp. xyli (strain CTCB07), this protein is Phosphoribosyl-AMP cyclohydrolase.